A 303-amino-acid chain; its full sequence is Glycine--tRNA ligase alpha subunit (303 aa).

This sequence belongs to the class-II aminoacyl-tRNA synthetase family. In terms of assembly, tetramer of two alpha and two beta subunits.

Its subcellular location is the cytoplasm. The enzyme catalyses tRNA(Gly) + glycine + ATP = glycyl-tRNA(Gly) + AMP + diphosphate. The chain is Glycine--tRNA ligase alpha subunit from Cronobacter sakazakii (strain ATCC BAA-894) (Enterobacter sakazakii).